Reading from the N-terminus, the 270-residue chain is MANLDVIVDRSDPAVQRIVDVTKHSRSVVRTVLIEDIEPLTQSIRAGVEFTEVYGLDTVPFPGDLLAACEKRGIRVRLLSAAVANQVFKTEKKPKVFGIAKVPPAGRFADLESLSGDVVLLDGVKIVGNIGAIVRTRSALGAAGIVLVDSGLGTIADRRLIRASRGYVFSLPIVLATRDEALAFFRDGGMRPVVFEADGKLSIGELDGIDERLVLVFGSEKTGPSGEFAGVATESVSIPMNPAAESLNVSVSAGIALHRRARRNLSRPRG.

Positions 135, 165, 218, 238, and 247 each coordinate S-adenosyl-L-methionine.

Belongs to the class IV-like SAM-binding methyltransferase superfamily. RNA methyltransferase TsnR/AvirB family.

The catalysed reaction is adenosine(1067) in 23S rRNA + S-adenosyl-L-methionine = 2'-O-methyladenosine(1067) in 23S rRNA + S-adenosyl-L-homocysteine + H(+). In terms of biological role, specifically methylates the adenosine-1067 in 23S ribosomal RNA. Confers resistance to antibiotic thiostrepton. This chain is 23S rRNA (adenosine(1067)-2'-O)-methyltransferase, found in Streptomyces laurentii.